Reading from the N-terminus, the 194-residue chain is uncharacterized protein (194 aa).

Positions 1-22 (MNKVTKTAIAGLLALFAGNAAA) are cleaved as a signal peptide. C38 and C78 form a disulfide bridge.

Belongs to the fimbrial protein family.

The protein localises to the fimbrium. Its function is as follows. Part of the yraHIJK fimbrial operon. Could contribute to adhesion to various surfaces in specific environmental niches. Increases adhesion to eukaryotic T24 bladder epithelial cells in the absence of fim operon. This is an uncharacterized protein from Escherichia coli (strain K12).